Consider the following 255-residue polypeptide: Ribonuclease HII (255 aa).

The 184-residue stretch at 72–255 (RLIAGIDEVG…RTFAPIKDMI (184 aa)) folds into the RNase H type-2 domain. Residues Asp78, Glu79, and Asp170 each coordinate a divalent metal cation.

It belongs to the RNase HII family. Mn(2+) serves as cofactor. Requires Mg(2+) as cofactor.

The protein resides in the cytoplasm. The enzyme catalyses Endonucleolytic cleavage to 5'-phosphomonoester.. Its function is as follows. Endonuclease that specifically degrades the RNA of RNA-DNA hybrids. This chain is Ribonuclease HII, found in Enterococcus faecalis (strain ATCC 700802 / V583).